The following is a 241-amino-acid chain: Putative integrase ORF241 (241 aa).

In terms of domain architecture, Tyr recombinase spans V82 to D241. Active-site residues include R119, K144, H191, R194, and H217. Residue Y226 is the O-(3'-phospho-DNA)-tyrosine intermediate of the active site.

This sequence belongs to the 'phage' integrase family.

Functionally, this protein may encode an integrase, which is necessary for integration of the viral DNA into host genome. The sequence is that of Putative integrase ORF241 from Acidianus convivator (ATV).